Consider the following 422-residue polypeptide: MAKQIQAIRGMNDCLPTQSALWQKVEGTIKQVVSAYGYNEIRMPIVESTHLFKRAIGEVTDVVEKEMYTFEDRNGDSLTLRPEGTAGCVRAGIQNGLLYNQEQRLWYIGPMFRYERPQKGRYRQFHQVGVEVFGLNGPDVDAELIMMTARLWRELGINQHVRLELNSIGSLDARATYREALIAFLEQHLEVLDEDCKRRMHTNPLRVLDTKNPAVQEILVDAPKLSEYLDDDSKAHFAGLCELLDAAGIEYQVNERLVRGLDYYNRTVFEWITESLGAQGTVCGGGRYDGLVEQLGGKATPAVGFAMGVERLVLLMETLELADVRRSVDAYVVTVGEGTMMAGMKLAEKLRENVPGLRVMNHFGGGNFKKQFKRADNVGAAIALVLGENEIADNTVVVKDLRGGEQTTMAQDEVTAKLAELI.

Belongs to the class-II aminoacyl-tRNA synthetase family. In terms of assembly, homodimer.

The protein localises to the cytoplasm. It catalyses the reaction tRNA(His) + L-histidine + ATP = L-histidyl-tRNA(His) + AMP + diphosphate + H(+). The chain is Histidine--tRNA ligase (hisS) from Photobacterium profundum (strain SS9).